The chain runs to 392 residues: Succinyl-diaminopimelate desuccinylase (392 aa).

H78 lines the Zn(2+) pocket. Residue D80 is part of the active site. D110 serves as a coordination point for Zn(2+). The Proton acceptor role is filled by E145. Zn(2+) contacts are provided by E146, E174, and H363.

Belongs to the peptidase M20A family. DapE subfamily. Homodimer. Requires Zn(2+) as cofactor. Co(2+) is required as a cofactor.

The catalysed reaction is N-succinyl-(2S,6S)-2,6-diaminopimelate + H2O = (2S,6S)-2,6-diaminopimelate + succinate. It participates in amino-acid biosynthesis; L-lysine biosynthesis via DAP pathway; LL-2,6-diaminopimelate from (S)-tetrahydrodipicolinate (succinylase route): step 3/3. Catalyzes the hydrolysis of N-succinyl-L,L-diaminopimelic acid (SDAP), forming succinate and LL-2,6-diaminopimelate (DAP), an intermediate involved in the bacterial biosynthesis of lysine and meso-diaminopimelic acid, an essential component of bacterial cell walls. This Methylobacterium radiotolerans (strain ATCC 27329 / DSM 1819 / JCM 2831 / NBRC 15690 / NCIMB 10815 / 0-1) protein is Succinyl-diaminopimelate desuccinylase.